A 378-amino-acid chain; its full sequence is tRNA-specific 2-thiouridylase MnmA (378 aa).

ATP is bound by residues 9–16 (GVSGGVDS) and Met35. Positions 94-96 (NPD) are interaction with target base in tRNA. Cys99 functions as the Nucleophile in the catalytic mechanism. Cys99 and Cys195 are disulfide-bonded. Residue Gly123 participates in ATP binding. The segment at 145 to 147 (KDQ) is interaction with tRNA. Cys195 serves as the catalytic Cysteine persulfide intermediate. Residues 307–308 (RY) are interaction with tRNA.

It belongs to the MnmA/TRMU family.

The protein resides in the cytoplasm. The enzyme catalyses S-sulfanyl-L-cysteinyl-[protein] + uridine(34) in tRNA + AH2 + ATP = 2-thiouridine(34) in tRNA + L-cysteinyl-[protein] + A + AMP + diphosphate + H(+). Its function is as follows. Catalyzes the 2-thiolation of uridine at the wobble position (U34) of tRNA, leading to the formation of s(2)U34. This chain is tRNA-specific 2-thiouridylase MnmA, found in Xanthomonas oryzae pv. oryzae (strain PXO99A).